Here is a 289-residue protein sequence, read N- to C-terminus: MAKRIVLFLLTNLAITFVLGIVLNIIFQVTGIQGGSTGGILVMSLVFGFAGSLISLFMSKSMALRSVGAEVIQQPRNHAEQWLFDTVQRQSQQANIPMPDIAIYHSADVNAFATGATKNNSLVAVSTGLLDNMTEDEAEAVVAHEIAHIANGDMVTMTLLQGVLNTFVIFLSRIISTAASSGKDENGNATQNTLVFWIVDIALQMIFGVIATMIAMWFSRYREYRADAGSAQLVGKEKMIAALQRLQHVHEPQEMQGSLAAFMINGARSKELFMSHPPLEKRIEALRNL.

Transmembrane regions (helical) follow at residues 7-27 (LFLL…NIIF) and 38-58 (GGIL…SLFM). Histidine 144 lines the Zn(2+) pocket. The active site involves glutamate 145. Histidine 148 provides a ligand contact to Zn(2+). 2 helical membrane passes run 155–175 (VTMT…SRII) and 194–214 (LVFW…ATMI). Position 223 (glutamate 223) interacts with Zn(2+).

Belongs to the peptidase M48B family. Requires Zn(2+) as cofactor.

It is found in the cell inner membrane. The chain is Protease HtpX from Actinobacillus pleuropneumoniae serotype 5b (strain L20).